An 896-amino-acid chain; its full sequence is Androgen receptor (896 aa).

Residues 1–534 form a modulating region; sequence MEVQLGLGRV…PIDYYFPPQK (534 aa). Residues 1–563 form an interaction with ZNF318 region; it reads MEVQLGLGRV…GSCKVFFKRA (563 aa). 2 disordered regions span residues 35-152 and 178-218; these read QNPG…LSLL and LLQQ…YLGG. The segment covering 54–78 has biased composition (low complexity); sequence LQQQQLQQQETSPRRQQQQQQQPSE. A Phosphoserine; by CDK9 modification is found at Ser-65. Ser-81 is subject to Phosphoserine. The span at 178-189 shows a compositional bias: low complexity; that stretch reads LLQQQQQQQQQQ. A compositionally biased stretch (polar residues) spans 190-199; sequence EAVSEGNSSG. The residue at position 215 (Tyr-215) is a Phosphotyrosine; by CSK. Phosphoserine is present on Ser-248. Tyr-259 is subject to Phosphotyrosine; by CSK and TNK2. Phosphotyrosine; by CSK occurs at positions 299, 338, 349, and 354. Tyr-355 is subject to Phosphotyrosine; by CSK and TNK2. Residue Lys-378 forms a Glycyl lysine isopeptide (Lys-Gly) (interchain with G-Cter in SUMO) linkage. Tyr-385 carries the post-translational modification Phosphotyrosine; by CSK. Residue Lys-497 forms a Glycyl lysine isopeptide (Lys-Gly) (interchain with G-Cter in SUMO) linkage. Residues Tyr-511 and Tyr-528 each carry the phosphotyrosine; by CSK modification. The tract at residues 528 to 895 is interaction with LPXN; that stretch reads YYFPPQKTCL…GKVKPIYFHT (368 aa). Residues 535-608 constitute a DNA-binding region (nuclear receptor); sequence TCLICGDEAS…AGMTLGARKL (74 aa). 2 consecutive NR C4-type zinc fingers follow at residues 536-556 and 572-596; these read CLIC…CGSC and CASR…LRKC. Residues 548–638 are interaction with HIPK3; that stretch reads YGALTCGSCK…TEEPAQKLTV (91 aa). The tract at residues 568-895 is interaction with CCAR1; the sequence is QKYLCASRND…GKVKPIYFHT (328 aa). An interaction with KAT7 region spans residues 601 to 895; it reads MTLGARKLKK…GKVKPIYFHT (295 aa). A Phosphoserine; by STK4/MST1 modification is found at Ser-627. The region spanning 645 to 876 is the NR LBD domain; the sequence is ECQPIFLNVL…DFPEMMAEII (232 aa). Positions 682 and 729 each coordinate 17beta-hydroxy-5alpha-androstan-3-one. Glycyl lysine isopeptide (Lys-Gly) (interchain with G-Cter in ubiquitin) cross-links involve residues Lys-822 and Lys-824. A 17beta-hydroxy-5alpha-androstan-3-one-binding site is contributed by Thr-854. Tyr-892 is subject to Phosphotyrosine; by CSK.

It belongs to the nuclear hormone receptor family. NR3 subfamily. As to quaternary structure, binds DNA as a homodimer. Part of a ternary complex containing AR, EFCAB6/DJBP and PARK7. Interacts with HIPK3 and NR0B2 in the presence of androgen. The ligand binding domain interacts with KAT7/HBO1 in the presence of dihydrotestosterone. Interacts with EFCAB6/DJBP, PQBP1, RANBP9, RBAK, SPDEF, SRA1, TGFB1I1 and RREB1. Interacts with ZMIZ1/ZIMP10 and ZMIZ2/ZMIP7 which both enhance its transactivation activity. Interacts with SLC30A9 and RAD54L2/ARIP4. Interacts with MACROD1 (via macro domain). Interacts via the ligand-binding domain with LXXLL and FXXLF motifs from NCOA1, NCOA2, NCOA3 and MAGEA11. Interacts (via nuclear receptor DNA binding domain and nuclear receptor ligand binding domain) with NCOA4. The AR N-terminal poly-Gln region binds Ran resulting in enhancement of AR-mediated transactivation. Ran-binding decreases as the poly-Gln length increases. Interacts with HIP1 (via coiled coil domain). Interacts (via ligand-binding domain) with TRIM68. Interacts with TNK2. Interacts with USP26. Interacts with RNF6. Interacts (regulated by RNF6 probably through polyubiquitination) with RNF14; regulates AR transcriptional activity. Interacts with PRMT2 and TRIM24. Interacts with RACK1. Interacts with RANBP10; this interaction enhances dihydrotestosterone-induced AR transcriptional activity. Interacts with PRPF6 in a hormone-independent way; this interaction enhances dihydrotestosterone-induced AR transcriptional activity. Interacts with STK4/MST1. Interacts with ZIPK/DAPK3. Interacts with LPXN. Interacts with MAK. Part of a complex containing AR, MAK and NCOA3. Interacts with CRY1. Interacts with CCAR1 and GATA2. Interacts with ZNF318. Interacts with BUD31. Interacts with ARID4A. Interacts with ARID4B. Interacts (via NR LBD domain) with ZBTB7A; the interaction is direct and androgen-dependent. Interacts with NCOR1. Interacts with NCOR2. Interacts with CRY2 in a ligand-dependent manner. In terms of processing, phosphorylated in prostate cancer cells in response to several growth factors including EGF. Phosphorylation is induced by c-Src kinase (CSK). Tyr-511 is one of the major phosphorylation sites and an increase in phosphorylation and Src kinase activity is associated with prostate cancer progression. Phosphorylation by TNK2 enhances the DNA-binding and transcriptional activity. Phosphorylation at Ser-65 by CDK9 regulates AR promoter selectivity and cell growth. Post-translationally, sumoylated on Lys-378 (major) and Lys-497. Ubiquitinated. Deubiquitinated by USP26. 'Lys-6' and 'Lys-27'-linked polyubiquitination by RNF6 modulates AR transcriptional activity and specificity. Palmitoylated by ZDHHC7 and ZDHHC21. Palmitoylation is required for plasma membrane targeting and for rapid intracellular signaling via ERK and AKT kinases and cAMP generation.

The protein localises to the nucleus. Its subcellular location is the cytoplasm. In terms of biological role, steroid hormone receptors are ligand-activated transcription factors that regulate eukaryotic gene expression and affect cellular proliferation and differentiation in target tissues. Transcription factor activity is modulated by bound coactivator and corepressor proteins like ZBTB7A that recruits NCOR1 and NCOR2 to the androgen response elements/ARE on target genes, negatively regulating androgen receptor signaling and androgen-induced cell proliferation. Transcription activation is also down-regulated by NR0B2. Activated, but not phosphorylated, by HIPK3 and ZIPK/DAPK3. The polypeptide is Androgen receptor (AR) (Sus scrofa (Pig)).